A 144-amino-acid chain; its full sequence is L-fucose mutarotase (144 aa).

His22 (proton donor) is an active-site residue. Residues Asp30, Arg109, and 131-133 each bind substrate; that span reads YGN.

The protein belongs to the RbsD / FucU family. FucU mutarotase subfamily. As to quaternary structure, homodecamer.

It is found in the cytoplasm. The catalysed reaction is alpha-L-fucose = beta-L-fucose. Its pathway is carbohydrate metabolism; L-fucose metabolism. Its function is as follows. Involved in the anomeric conversion of L-fucose. The sequence is that of L-fucose mutarotase from Haemophilus influenzae (strain PittGG).